Here is a 639-residue protein sequence, read N- to C-terminus: Polypeptide N-acetylgalactosaminyltransferase 15 (639 aa).

Topologically, residues 1 to 11 (MLLRKRYRHRP) are cytoplasmic. Residues 12-34 (CRLQFLLLLLMLGCVLMMVAMLH) form a helical; Signal-anchor for type II membrane protein membrane-spanning segment. Residues 35–639 (PPHHTLHQTV…FDQINAVDER (605 aa)) lie on the Lumenal side of the membrane. A disordered region spans residues 106-155 (RNQSQGRRGGSYRLIKQPRRQDKEAPKRDWGADEDGEVSEEEELTPFSLD). A glycan (N-linked (GlcNAc...) asparagine) is linked at Asn-107. Residues 124–136 (RRQDKEAPKRDWG) are compositionally biased toward basic and acidic residues. A compositionally biased stretch (acidic residues) spans 137–149 (ADEDGEVSEEEEL). 5 cysteine pairs are disulfide-bonded: Cys-181-Cys-412, Cys-403-Cys-482, Cys-517-Cys-536, Cys-562-Cys-575, and Cys-603-Cys-620. Residues 190–299 (LPTASVILCF…PGWLEPLLSR (110 aa)) form a catalytic subdomain A region. Residues Asp-231 and Arg-260 each coordinate substrate. Mn(2+)-binding residues include Asp-283, His-285, and His-417. Residues 358 to 420 (PIRSPVVPGE…PCSRVGHIYQ (63 aa)) are catalytic subdomain B. One can recognise a Ricin B-type lectin domain in the interval 504–631 (SFSGKLHNTG…GKARQQWRFD (128 aa)). Asn-574 is a glycosylation site (N-linked (GlcNAc...) asparagine).

Belongs to the glycosyltransferase 2 family. GalNAc-T subfamily. Requires Mn(2+) as cofactor. In terms of tissue distribution, widely expressed. Highly expressed in small intestine, placenta, spleen, cerebral cortex and ovary. Expressed at intermediate level in uterus, mammary gland, stomach, cerebellum and whole brain. Weakly expressed in fetal brain, bone marrow, thyroid gland, thymus, heart, skeletal muscle, lung, liver, colon, pancreas, kidney and testis. Not expressed in leukocyte. Expressed in both normal and osteoarthritic cartilage. Expressed at low level in chondrocytes in all zones of both normal and osteoarthritic cartilage.

The protein localises to the golgi apparatus membrane. It carries out the reaction L-seryl-[protein] + UDP-N-acetyl-alpha-D-galactosamine = a 3-O-[N-acetyl-alpha-D-galactosaminyl]-L-seryl-[protein] + UDP + H(+). The catalysed reaction is L-threonyl-[protein] + UDP-N-acetyl-alpha-D-galactosamine = a 3-O-[N-acetyl-alpha-D-galactosaminyl]-L-threonyl-[protein] + UDP + H(+). It participates in protein modification; protein glycosylation. In terms of biological role, catalyzes the initial reaction in O-linked oligosaccharide biosynthesis, the transfer of an N-acetyl-D-galactosamine residue to a serine or threonine residue on the protein receptor. Although it displays a much weaker activity toward all substrates tested compared to GALNT2, it is able to transfer up to seven GalNAc residues to the Muc5AC peptide, suggesting that it can fill vicinal Thr/Ser residues in cooperation with other GALNT proteins. Prefers Muc1a as substrate. The protein is Polypeptide N-acetylgalactosaminyltransferase 15 (GALNT15) of Homo sapiens (Human).